The chain runs to 162 residues: Regulator of sigma D (162 aa).

It belongs to the Rsd/AlgQ family. As to quaternary structure, interacts with RpoD.

It localises to the cytoplasm. In terms of biological role, binds RpoD and negatively regulates RpoD-mediated transcription activation by preventing the interaction between the primary sigma factor RpoD with the catalytic core of the RNA polymerase and with promoter DNA. May be involved in replacement of the RNA polymerase sigma subunit from RpoD to RpoS during the transition from exponential growth to the stationary phase. The chain is Regulator of sigma D from Salmonella arizonae (strain ATCC BAA-731 / CDC346-86 / RSK2980).